The chain runs to 231 residues: Elongation factor 1-delta 1 (231 aa).

At Ala2 the chain carries N-acetylalanine. The GST C-terminal domain occupies 10 to 73; the sequence is DAGLKKLDEH…LRISGVSAEG (64 aa). Disordered regions lie at residues 85-108 and 116-135; these read TEEA…EDDD and ETEE…KAST. Over residues 119 to 129 the composition is skewed to basic and acidic residues; it reads EEKKAAEERAA.

The protein belongs to the EF-1-beta/EF-1-delta family. As to quaternary structure, EF-1 is composed of 4 subunits: alpha, beta (1B-alpha=beta'), delta (1B-beta), and gamma (1B-gamma).

EF-1-beta and EF-1-delta stimulate the exchange of GDP bound to EF-1-alpha to GTP. This Arabidopsis thaliana (Mouse-ear cress) protein is Elongation factor 1-delta 1.